Consider the following 222-residue polypeptide: Probable septum site-determining protein MinC (222 aa).

Belongs to the MinC family. As to quaternary structure, interacts with MinD and FtsZ.

Functionally, cell division inhibitor that blocks the formation of polar Z ring septums. Rapidly oscillates between the poles of the cell to destabilize FtsZ filaments that have formed before they mature into polar Z rings. Prevents FtsZ polymerization. This is Probable septum site-determining protein MinC from Lysinibacillus sphaericus (strain C3-41).